We begin with the raw amino-acid sequence, 164 residues long: Hydrogenase 2 maturation protease (164 aa).

Ni(2+)-binding residues include glutamate 16, aspartate 62, and histidine 93.

It belongs to the peptidase A31 family. Ni(2+) is required as a cofactor.

Functionally, protease involved in the C-terminal processing of HybC, the large subunit of hydrogenase 2. Specifically cleaves off a 15 amino acid peptide from the C-terminus of the precursor of HybC. The chain is Hydrogenase 2 maturation protease (hybD) from Escherichia coli (strain K12).